The chain runs to 89 residues: Small ribosomal subunit protein uS15 (89 aa).

This sequence belongs to the universal ribosomal protein uS15 family. Part of the 30S ribosomal subunit. Forms a bridge to the 50S subunit in the 70S ribosome, contacting the 23S rRNA.

One of the primary rRNA binding proteins, it binds directly to 16S rRNA where it helps nucleate assembly of the platform of the 30S subunit by binding and bridging several RNA helices of the 16S rRNA. In terms of biological role, forms an intersubunit bridge (bridge B4) with the 23S rRNA of the 50S subunit in the ribosome. The sequence is that of Small ribosomal subunit protein uS15 from Levilactobacillus brevis (strain ATCC 367 / BCRC 12310 / CIP 105137 / JCM 1170 / LMG 11437 / NCIMB 947 / NCTC 947) (Lactobacillus brevis).